The following is a 370-amino-acid chain: Flagellar P-ring protein (370 aa).

Positions 1–27 (MPARPIPVPLLALALAAALAVPSPAAA) are cleaved as a signal peptide.

The protein belongs to the FlgI family. As to quaternary structure, the basal body constitutes a major portion of the flagellar organelle and consists of four rings (L,P,S, and M) mounted on a central rod.

The protein localises to the periplasm. It localises to the bacterial flagellum basal body. Assembles around the rod to form the L-ring and probably protects the motor/basal body from shearing forces during rotation. The polypeptide is Flagellar P-ring protein (Anaeromyxobacter sp. (strain K)).